Reading from the N-terminus, the 152-residue chain is UPF0756 membrane protein Helmi_09930 (152 aa).

The next 5 helical transmembrane spans lie at 6 to 26, 52 to 72, 75 to 95, 111 to 131, and 132 to 152; these read VLLILILLLGVIARSPMTALA, TGLIMLTLAMLAPFATGKVGL, VLLSFASLPGIIAVIGGVLAT, IIVGMIVGSLLGIVLFGGIPV, and GPLMAGGLTALILQIYGWLSK.

It belongs to the UPF0756 family.

The protein localises to the cell membrane. The polypeptide is UPF0756 membrane protein Helmi_09930 (Heliobacterium modesticaldum (strain ATCC 51547 / Ice1)).